The chain runs to 608 residues: Aspartate--tRNA(Asp/Asn) ligase (608 aa).

E187 contributes to the L-aspartate binding site. The aspartate stretch occupies residues 211-214; it reads QQFK. R233 and H461 together coordinate L-aspartate. 233–235 contacts ATP; the sequence is RDE. E495 contributes to the ATP binding site. An L-aspartate-binding site is contributed by R502. 547 to 550 contributes to the ATP binding site; that stretch reads GLDR.

This sequence belongs to the class-II aminoacyl-tRNA synthetase family. Type 1 subfamily. In terms of assembly, homodimer.

Its subcellular location is the cytoplasm. It catalyses the reaction tRNA(Asx) + L-aspartate + ATP = L-aspartyl-tRNA(Asx) + AMP + diphosphate. Aspartyl-tRNA synthetase with relaxed tRNA specificity since it is able to aspartylate not only its cognate tRNA(Asp) but also tRNA(Asn). Reaction proceeds in two steps: L-aspartate is first activated by ATP to form Asp-AMP and then transferred to the acceptor end of tRNA(Asp/Asn). The protein is Aspartate--tRNA(Asp/Asn) ligase of Prosthecochloris aestuarii (strain DSM 271 / SK 413).